Consider the following 507-residue polypeptide: Extracellular elastase (507 aa).

The N-terminal stretch at 1–28 (MKNFSKFALTSIAALTVASPLVNTEVDA) is a signal peptide. The propeptide occupies 29-207 (KDKVSATQNI…VVDKLNMIKE (179 aa)). Residue D347 coordinates Ca(2+). H351 contributes to the Zn(2+) binding site. E352 is an active-site residue. 2 residues coordinate Zn(2+): H355 and E375. Ca(2+) is bound by residues D386, E388, D389, L391, E394, Y397, T398, V401, and D404. H435 (proton donor) is an active-site residue.

It belongs to the peptidase M4 family. Ca(2+) serves as cofactor. It depends on Zn(2+) as a cofactor.

Its subcellular location is the secreted. Its function is as follows. Protease that has a low substrate specificity. Glucagon is preferentially cleaved between aromatic (Phe) and hydrophobic (Val) amino acids. Hydrolyzes casein and elastin. This chain is Extracellular elastase (sepA), found in Staphylococcus epidermidis.